A 407-amino-acid polypeptide reads, in one-letter code: Polygalacturonase (407 aa).

An N-terminal signal peptide occupies residues 1–26 (MAPHLNIVPSMFVLLLLFISASKVQS). 2 PbH1 repeats span residues 180–206 (CKNITLERLKIEAPDESPNTDGIHMGK) and 207–228 (SEGVNIIASDIKTGDDCISIGD). A glycan (N-linked (GlcNAc...) asparagine) is linked at Asn-182. The Proton donor role is filled by Asp-221. The cysteines at positions 223 and 240 are disulfide-linked. His-244 is an active-site residue. 2 PbH1 repeats span residues 260-281 (VEGIKISNCTITNTSNGARIKT) and 290-311 (VSEIHFEDITMNNVSSPILIDQ). N-linked (GlcNAc...) asparagine glycosylation is found at Asn-267, Asn-272, Asn-302, and Asn-331. Cystine bridges form between Cys-351-Cys-357 and Cys-379-Cys-395. The stretch at 357-384 (CQNVELADIDIKHNGAEPATSQCLNVKP) is one PbH1 5 repeat.

It belongs to the glycosyl hydrolase 28 family. Pollen.

Its subcellular location is the secreted. The protein localises to the cell wall. It catalyses the reaction (1,4-alpha-D-galacturonosyl)n+m + H2O = (1,4-alpha-D-galacturonosyl)n + (1,4-alpha-D-galacturonosyl)m.. In terms of biological role, may function in the depolymerization of the pectin in its walls during pollen tube elongation, or in that of the pistil during pollination. The polypeptide is Polygalacturonase (G9) (Gossypium hirsutum (Upland cotton)).